The following is a 368-amino-acid chain: Ubl carboxyl-terminal hydrolase 18 (368 aa).

The mediates interaction with IFNAR2 stretch occupies residues 31-48 (MKRKRVLSRDLCSAWDSP). Positions 48–109 (PHGLVGLHNI…LLLLLEKMQD (62 aa)) are mediates interaction with STAT2. Positions 52 to 366 (VGLHNIGQTC…TAYLLVYTKT (315 aa)) constitute a USP domain. C61 functions as the Nucleophile in the catalytic mechanism. The mediates interaction with STAT2 and necessary for the negative regulation of the type I IFN signaling pathway stretch occupies residues 299 to 308 (ELFAVIAHVG). A mediates interaction with IFNAR2 region spans residues 309-368 (MADFGHYCAYIRNPVDGKWFCFNDSHVCWVTWKDVQCTYGNHRYRWRETAYLLVYTKTGS). The active-site Proton acceptor is the H314.

The protein belongs to the peptidase C19 family. In terms of assembly, interacts with STAT2; the interaction is direct. Interacts with IFNAR2; indirectly via STAT2, it negatively regulates the assembly of the ternary interferon-IFNAR1-IFNAR2 complex and inhibits type I interferon signaling. Interacts with STING1. Interacts with USP20.

It carries out the reaction Thiol-dependent hydrolysis of ester, thioester, amide, peptide and isopeptide bonds formed by the C-terminal Gly of ubiquitin (a 76-residue protein attached to proteins as an intracellular targeting signal).. In terms of biological role, interferon-induced ISG15-specific protease that plays a crucial role for maintaining a proper balance of ISG15-conjugated proteins in cells. Regulates protein ISGylation by efficiently cleaving ISG15 conjugates linked via isopeptide bonds. Regulates T-cell activation and T-helper 17 (Th17) cell differentiation by deubiquitinating TAK1, likely to keep TAK1-TAB complexes in steady conditions. In turn, restricts activation of NF-kappa-B, NFAT, and JNK as well as expression of IL2 in T-cells after TCR activation. Acts as a molecular adapter with USP20 to promote innate antiviral response through deubiquitinating STING1. Involved also in the negative regulation of the inflammatory response triggered by type I interferon. Upon recruitment by STAT2 to the type I interferon receptor subunit IFNAR2 interferes with the assembly of the ternary interferon-IFNAR1-IFNAR2 complex and acts as a negative regulator of the type I interferon signaling pathway. This Mus musculus (Mouse) protein is Ubl carboxyl-terminal hydrolase 18 (Usp18).